The primary structure comprises 150 residues: Large ribosomal subunit protein bL9 (150 aa).

The protein belongs to the bacterial ribosomal protein bL9 family.

Binds to the 23S rRNA. The polypeptide is Large ribosomal subunit protein bL9 (Shewanella pealeana (strain ATCC 700345 / ANG-SQ1)).